The primary structure comprises 350 residues: UDP-glucose 4-epimerase GEPI48 (350 aa).

Position 5 to 36 (5 to 36) interacts with NAD(+); it reads TVLVTGGAGYIGSHTVLQLLLGGFKAVVVDNL. Residue Ser-130 coordinates substrate. Tyr-154 (proton acceptor) is an active-site residue.

Belongs to the NAD(P)-dependent epimerase/dehydratase family. The cofactor is NAD(+).

The catalysed reaction is UDP-alpha-D-glucose = UDP-alpha-D-galactose. It functions in the pathway carbohydrate metabolism; galactose metabolism. This is UDP-glucose 4-epimerase GEPI48 from Cyamopsis tetragonoloba (Guar).